A 92-amino-acid polypeptide reads, in one-letter code: Small ribosomal subunit protein uS19 (92 aa).

The interval 73–92 is disordered; it reads EFSPTRSFRGHAGAKNKGKK. Residues 80–92 are compositionally biased toward basic residues; it reads FRGHAGAKNKGKK.

It belongs to the universal ribosomal protein uS19 family.

Its function is as follows. Protein S19 forms a complex with S13 that binds strongly to the 16S ribosomal RNA. This Flavobacterium psychrophilum (strain ATCC 49511 / DSM 21280 / CIP 103535 / JIP02/86) protein is Small ribosomal subunit protein uS19.